We begin with the raw amino-acid sequence, 73 residues long: MPEVSERRAEEALLVAHFVACEGNRVIAYCALASGAVKQPKRLAVSGAICLTRFRVPSSAASQSTLLLGSRHP.

This is an uncharacterized protein from Sinorhizobium fredii (strain NBRC 101917 / NGR234).